The primary structure comprises 596 residues: Phosphoprotein (596 aa).

Composition is skewed to polar residues over residues 1–11 (MENNAKDNQIM), 38–66 (TDSQ…QLES), and 74–85 (ENSGSVNENRQL). Disordered stretches follow at residues 1–25 (MENN…SSDI), 38–196 (TDSQ…ESIS), and 220–352 (KNTR…EEST). An N0 binding region spans residues 33 to 41 (EFILSTDSQ). Positions 88-97 (SHERATETKN) are enriched in basic and acidic residues. Positions 127–144 (ISRSSPDPNNGTQIQESI) are enriched in polar residues. 2 stretches are compositionally biased toward basic and acidic residues: residues 151–168 (EMDK…KDVP) and 233–249 (EDDK…EDTN). Residues 270–324 (TLKISTTTGESTRPQSGSQGKRITSWNILNSESGSRTESTSQNSQIPTSGKSNTV) show a composition bias toward polar residues. The segment covering 331 to 352 (LESRIKTQKTDGKEREDTEEST) has biased composition (basic and acidic residues). The tract at residues 374 to 441 (LDLYQDKRVV…KMDESHRRLI (68 aa)) is multimerization. The stretch at 416–436 (LNQIQNEILSLKTDLKKMDES) forms a coiled coil. The interval 442 to 475 (ENQKEQLSLITSLISNLKIMTERGGKKDQPENSG) is l protein binding.

The protein belongs to the respirovirus P protein family. Homotetramer. Interacts (via multimerization domain) with polymerase L; this interaction forms the polymerase complex. Interacts (via N-terminus) with N0; this interaction allows P to chaperon N0 before encapsidation and form the N-P complex. Interacts (via C-terminus) with N-RNA template; this interaction positions the polymerase on the template.

Its function is as follows. Essential cofactor of the RNA polymerase L that plays a central role in the transcription and replication by forming the polymerase complex with RNA polymerase L and recruiting L to the genomic N-RNA template for RNA synthesis. Also plays a central role in the encapsidation of nascent RNA chains by forming the encapsidation complex with the nucleocapsid protein N (N-P complex). Acts as a chaperone for newly synthesized free N protein, so-called N0, allowing encapsidation of nascent RNA chains during replication. The nucleoprotein protein N prevents excessive phosphorylation of P, which leads to down-regulation of viral transcription/ replication. Participates, together with N, in the formation of viral factories (viroplasms), which are large inclusions in the host cytoplasm where replication takes place. Recruits host PI4KB and remodel the host endoplasmic reticulum membrane to form viral replication factories. This Bovine parainfluenza 3 virus (BPIV-3) protein is Phosphoprotein (P/V/D).